A 154-amino-acid polypeptide reads, in one-letter code: UPF0547 protein C16orf87 homolog (154 aa).

Positions 46 to 119 (HPEKAPSSTE…KHEEEREKQE (74 aa)) are disordered. The segment covering 68 to 84 (VRREKINSTVNKDLENR) has biased composition (basic and acidic residues). A Phosphoserine modification is found at S91. The stretch at 104–132 (KSASAKKHEEEREKQEKEIDIYANLSDEK) forms a coiled coil. Basic and acidic residues predominate over residues 109–119 (KKHEEEREKQE).

The protein belongs to the UPF0547 family.

The sequence is that of UPF0547 protein C16orf87 homolog from Bos taurus (Bovine).